A 204-amino-acid chain; its full sequence is Cysteine-rich protein 3 (204 aa).

An LIM zinc-binding 1 domain is found at 3–64; sequence WTCPRCQQPV…KPCYGALFGP (62 aa). The interval 88-107 is disordered; sequence ISLSPSNFSPPRPRTGLSRA. Residues 122-183 form the LIM zinc-binding 2 domain; it reads SLCPGCGDPV…IPCYGYLFGP (62 aa).

Expressed specifically by the thymus.

Its subcellular location is the cytoplasm. This chain is Cysteine-rich protein 3 (Crip3), found in Mus musculus (Mouse).